The primary structure comprises 779 residues: Translation initiation factor IF-2 (779 aa).

Residues 44-193 (RQLDNAVDGT…TPPKPKELPE (150 aa)) are disordered. Over residues 53–65 (TNKKAEAPKKETT) the composition is skewed to basic and acidic residues. The segment covering 66-81 (SNENGNSKGPNKPNMT) has biased composition (polar residues). Composition is skewed to low complexity over residues 82–93 (NSNEKSNKPNKP) and 117–167 (ANTS…NNKG). One can recognise a tr-type G domain in the interval 280 to 449 (ERPPVVTIMG…LLVSEVEELK (170 aa)). The interval 289-296 (GHVDHGKT) is G1. A GTP-binding site is contributed by 289-296 (GHVDHGKT). Residues 314–318 (GITQH) form a G2 region. The interval 335-338 (DTPG) is G3. Residues 335–339 (DTPGH) and 389–392 (NKID) each bind GTP. The G4 stretch occupies residues 389–392 (NKID). The tract at residues 425 to 427 (SAK) is G5.

The protein belongs to the TRAFAC class translation factor GTPase superfamily. Classic translation factor GTPase family. IF-2 subfamily.

It is found in the cytoplasm. Its function is as follows. One of the essential components for the initiation of protein synthesis. Protects formylmethionyl-tRNA from spontaneous hydrolysis and promotes its binding to the 30S ribosomal subunits. Also involved in the hydrolysis of GTP during the formation of the 70S ribosomal complex. The chain is Translation initiation factor IF-2 from Listeria monocytogenes serovar 1/2a (strain ATCC BAA-679 / EGD-e).